A 558-amino-acid chain; its full sequence is FRIGIDA-like protein 3 (558 aa).

The stretch at 9–102 (SLMDSTSSKI…ALERLQKKRD (94 aa)) forms a coiled coil. Residues 454–463 (AKADKKRATE) are compositionally biased toward basic and acidic residues. Residues 454-494 (AKADKKRATEPMKPQPKRPRGAQPRVTDNNNNINNNKTGYG) are disordered.

Belongs to the Frigida family.

In Arabidopsis thaliana (Mouse-ear cress), this protein is FRIGIDA-like protein 3 (FRL3).